A 147-amino-acid chain; its full sequence is Bis(5'-nucleosyl)-tetraphosphatase [asymmetrical] (147 aa).

A2 carries the N-acetylalanine modification. A Nudix hydrolase domain is found at 2 to 139; the sequence is ALRACGLIIF…EMKAALQEGH (138 aa). The short motif at 43–64 is the Nudix box element; the sequence is GHVEPGESDLETALRETQEEAG.

This sequence belongs to the Nudix hydrolase family. A divalent metal cation is required as a cofactor.

The enzyme catalyses P(1),P(4)-bis(5'-guanosyl) tetraphosphate + H2O = GMP + GTP + 2 H(+). It carries out the reaction a 5'-end CoA-ribonucleoside in mRNA + H2O = a 5'-end phospho-adenosine-phospho-ribonucleoside in mRNA + (R)-4'-phosphopantetheine + 2 H(+). It catalyses the reaction a 5'-end FAD-phospho-ribonucleoside in mRNA + H2O = a 5'-end phospho-adenosine-phospho-ribonucleoside in mRNA + FMN + 2 H(+). Functionally, catalyzes the asymmetric hydrolysis of diadenosine 5',5'''-P1,P4-tetraphosphate (Ap4A) to yield AMP and ATP. Exhibits decapping activity towards FAD-capped RNAs and dpCoA-capped RNAs in vitro. The chain is Bis(5'-nucleosyl)-tetraphosphatase [asymmetrical] (NUDT2) from Bos taurus (Bovine).